We begin with the raw amino-acid sequence, 193 residues long: Large ribosomal subunit protein bL25 (193 aa).

This sequence belongs to the bacterial ribosomal protein bL25 family. CTC subfamily. In terms of assembly, part of the 50S ribosomal subunit; part of the 5S rRNA/L5/L18/L25 subcomplex. Contacts the 5S rRNA. Binds to the 5S rRNA independently of L5 and L18.

Its function is as follows. This is one of the proteins that binds to the 5S RNA in the ribosome where it forms part of the central protuberance. This Oleidesulfovibrio alaskensis (strain ATCC BAA-1058 / DSM 17464 / G20) (Desulfovibrio alaskensis) protein is Large ribosomal subunit protein bL25.